Reading from the N-terminus, the 256-residue chain is Thiazole synthase (256 aa).

The Schiff-base intermediate with DXP role is filled by Lys95. 1-deoxy-D-xylulose 5-phosphate-binding positions include Gly156, 182-183 (AG), and 204-205 (NT).

This sequence belongs to the ThiG family. As to quaternary structure, homotetramer. Forms heterodimers with either ThiH or ThiS.

It is found in the cytoplasm. It catalyses the reaction [ThiS sulfur-carrier protein]-C-terminal-Gly-aminoethanethioate + 2-iminoacetate + 1-deoxy-D-xylulose 5-phosphate = [ThiS sulfur-carrier protein]-C-terminal Gly-Gly + 2-[(2R,5Z)-2-carboxy-4-methylthiazol-5(2H)-ylidene]ethyl phosphate + 2 H2O + H(+). The protein operates within cofactor biosynthesis; thiamine diphosphate biosynthesis. Catalyzes the rearrangement of 1-deoxy-D-xylulose 5-phosphate (DXP) to produce the thiazole phosphate moiety of thiamine. Sulfur is provided by the thiocarboxylate moiety of the carrier protein ThiS. In vitro, sulfur can be provided by H(2)S. The protein is Thiazole synthase of Escherichia coli O127:H6 (strain E2348/69 / EPEC).